Here is a 328-residue protein sequence, read N- to C-terminus: uncharacterized protein (328 aa).

Positions 37–179 (LTEKLLCHQG…AMTLLRCRKI (143 aa)) constitute an SIS domain. 52–57 (GIGKSG) is an ATP binding site. CBS domains are found at residues 207 to 264 (PRTE…GGDI) and 273 to 328 (MTRN…AGLL).

Belongs to the SIS family. GutQ/KpsF subfamily.

This is an uncharacterized protein from Chlamydia trachomatis serovar D (strain ATCC VR-885 / DSM 19411 / UW-3/Cx).